The chain runs to 511 residues: Serine/threonine-protein kinase Nek3 (511 aa).

Residue Met1 is modified to N-acetylmethionine. The interaction with VAV2 stretch occupies residues 1 to 282; that stretch reads MDNYTVLRVI…EQILDEIKIS (282 aa). The Protein kinase domain maps to 4–255; that stretch reads YTVLRVIGQG…ATTLLCRGSL (252 aa). Residues 10–18 and Lys33 each bind ATP; that span reads IGQGSFGRA. Asp125 serves as the catalytic Proton acceptor. Thr159 is subject to Phosphothreonine; by autocatalysis. 2 disordered regions span residues 299–370 and 443–511; these read LGEA…GPSS and GPLS…GERA. Residues 309 to 321 are compositionally biased toward basic and acidic residues; sequence EEERGRKCSHTEL. The segment covering 472-485 has biased composition (acidic residues); that stretch reads LDEEDTDFEEDNEN. The residue at position 477 (Thr477) is a Phosphothreonine. Over residues 498–511 the composition is skewed to gly residues; sequence YGDGPGGQLLGERA.

Belongs to the protein kinase superfamily. NEK Ser/Thr protein kinase family. NIMA subfamily. As to quaternary structure, interacts with PXN, PRLR, VAV1 and VAV2 and this interaction is prolactin-dependent. Requires Mg(2+) as cofactor. In terms of processing, phosphorylation at Thr-477 regulates its catalytic activity. In terms of tissue distribution, brain.

Its subcellular location is the cytoplasm. The protein resides in the cell projection. It is found in the axon. The enzyme catalyses L-seryl-[protein] + ATP = O-phospho-L-seryl-[protein] + ADP + H(+). It carries out the reaction L-threonyl-[protein] + ATP = O-phospho-L-threonyl-[protein] + ADP + H(+). Its function is as follows. Protein kinase which influences neuronal morphogenesis and polarity through effects on microtubules. Regulates microtubule acetylation in neurons. Contributes to prolactin-mediated phosphorylation of PXN and VAV2. In Mus musculus (Mouse), this protein is Serine/threonine-protein kinase Nek3 (Nek3).